The sequence spans 294 residues: Very long chain fatty acid elongase 5 (294 aa).

The next 7 membrane-spanning stretches (helical) occupy residues 26-46 (WLLL…LLIV), 64-84 (ILVV…YELV), 112-132 (VLWW…FFIL), 141-161 (FLHI…MNWV), 172-192 (FNSF…IPAI), 207-227 (LVQF…PCGF), and 231-251 (WLYF…NFYI). The interval 261-294 (AKKDPRHNGIKSVNGHSNGASHTNAVKNRKARTD) is disordered. Residues 274-286 (NGHSNGASHTNAV) show a composition bias toward polar residues.

This sequence belongs to the ELO family. ELOVL5 subfamily. As to expression, expression is highest in intestine, followed by brain and heart, and lowest in gill. Also expressed in liver, spleen and muscle.

It localises to the endoplasmic reticulum membrane. The protein localises to the cell projection. Its subcellular location is the dendrite. The enzyme catalyses a very-long-chain acyl-CoA + malonyl-CoA + H(+) = a very-long-chain 3-oxoacyl-CoA + CO2 + CoA. It carries out the reaction (6Z,9Z,12Z)-octadecatrienoyl-CoA + malonyl-CoA + H(+) = (8Z,11Z,14Z)-3-oxoeicosatrienoyl-CoA + CO2 + CoA. It catalyses the reaction (9Z,12Z,15Z)-octadecatrienoyl-CoA + malonyl-CoA + H(+) = (11Z,14Z,17Z)-3-oxoeicosatrienoyl-CoA + CO2 + CoA. The catalysed reaction is (9Z)-hexadecenoyl-CoA + malonyl-CoA + H(+) = 3-oxo-(11Z)-octadecenoyl-CoA + CO2 + CoA. The enzyme catalyses (9Z)-octadecenoyl-CoA + malonyl-CoA + H(+) = 3-oxo-(11Z)-eicosenoyl-CoA + CO2 + CoA. It carries out the reaction (11Z)-octadecenoyl-CoA + malonyl-CoA + H(+) = 3-oxo-(13Z)-eicosenoyl-CoA + CO2 + CoA. It catalyses the reaction (9Z,12Z)-octadecadienoyl-CoA + malonyl-CoA + H(+) = (11Z,14Z)-3-oxoicosa-11,14-dienoyl-CoA + CO2 + CoA. The catalysed reaction is (6Z,9Z,12Z,15Z)-octadecatetraenoyl-CoA + malonyl-CoA + H(+) = (8Z,11Z,14Z,17Z)-3-oxoicosatetraenoyl-CoA + CO2 + CoA. The enzyme catalyses (5Z,8Z,11Z,14Z)-eicosatetraenoyl-CoA + malonyl-CoA + H(+) = (7Z,10Z,13Z,16Z)-3-oxodocosatetraenoyl-CoA + CO2 + CoA. It carries out the reaction (5Z,8Z,11Z,14Z,17Z)-eicosapentaenoyl-CoA + malonyl-CoA + H(+) = 3-oxo-(7Z,10Z,13Z,16Z,19Z)-docosapentaenoyl-CoA + CO2 + CoA. It functions in the pathway lipid metabolism; polyunsaturated fatty acid biosynthesis. Catalyzes the first and rate-limiting reaction of the four reactions that constitute the long-chain fatty acids elongation cycle. This endoplasmic reticulum-bound enzymatic process allows the addition of 2 carbons to the chain of long- and very long-chain fatty acids (VLCFAs) per cycle. Condensing enzyme that acts specifically toward polyunsaturated acyl-CoA with the higher activity toward C18:3(n-6) acyl-CoA. May participate in the production of monounsaturated and of polyunsaturated VLCFAs of different chain lengths that are involved in multiple biological processes as precursors of membrane lipids and lipid mediators. In conditions where the essential linoleic and alpha linoleic fatty acids are lacking it is also involved in the synthesis of Mead acid from oleic acid. The sequence is that of Very long chain fatty acid elongase 5 from Tachysurus fulvidraco (Yellow catfish).